Reading from the N-terminus, the 412-residue chain is FAD-dependent monooxygenase nscC (412 aa).

A signal peptide spans 1–21; it reads MGKPQETILIIGAGIAGLTAS. FAD-binding residues include glutamate 35 and alanine 46. Residues asparagine 68 and asparagine 92 are each glycosylated (N-linked (GlcNAc...) asparagine). Arginine 119 contributes to the FAD binding site. N-linked (GlcNAc...) asparagine glycans are attached at residues asparagine 170, asparagine 231, and asparagine 251. FAD contacts are provided by aspartate 326 and glycine 339.

Belongs to the paxM FAD-dependent monooxygenase family. FAD is required as a cofactor.

The protein operates within secondary metabolite biosynthesis. FAD-dependent monooxygenase; part of the gene cluster that mediates the biosynthesis of neosartoricin B, a prenylated anthracenone that probably exhibits T-cell antiproliferative activity, suggestive of a physiological role as an immunosuppressive agent. The non-reducing polyketide synthase nscA probably synthesizes and cyclizes the decaketide backbone. The hydrolase nscB then mediates the product release through hydrolysis followed by spontaneous decarboxylation. The prenyltransferase nscD catalyzes the addition of the dimethylallyl group to the aromatic C5. The FAD-dependent monooxygenase nscC is then responsible for the stereospecific hydroxylation at C2. Neosartoricin B can be converted into two additional compounds neosartoricins C and D. Neosartoricin C is a spirocyclic compound that is cyclized through the attack of C3 hydroxyl on C14, followed by dehydration. On the other hand, neosartoricin D is a further cyclized compound in which attack of C2 on C14 in neosartoricin C results in the formation of the acetal-containing dioxabicyclo-octanone ring. Both of these compounds are novel and possibly represent related metabolites of the gene cluster. In Trichophyton rubrum (strain ATCC MYA-4607 / CBS 118892) (Athlete's foot fungus), this protein is FAD-dependent monooxygenase nscC.